Consider the following 273-residue polypeptide: Light-independent protochlorophyllide reductase iron-sulfur ATP-binding protein (273 aa).

Residues 12–17 (GIGKST) and Lys-41 contribute to the ATP site. Residue Ser-16 coordinates Mg(2+). Positions 97 and 131 each coordinate [4Fe-4S] cluster. 182–183 (NR) lines the ATP pocket.

The protein belongs to the NifH/BchL/ChlL family. Homodimer. Protochlorophyllide reductase is composed of three subunits; BchL, BchN and BchB. The cofactor is [4Fe-4S] cluster.

It catalyses the reaction chlorophyllide a + oxidized 2[4Fe-4S]-[ferredoxin] + 2 ADP + 2 phosphate = protochlorophyllide a + reduced 2[4Fe-4S]-[ferredoxin] + 2 ATP + 2 H2O. It participates in porphyrin-containing compound metabolism; bacteriochlorophyll biosynthesis (light-independent). Functionally, component of the dark-operative protochlorophyllide reductase (DPOR) that uses Mg-ATP and reduced ferredoxin to reduce ring D of protochlorophyllide (Pchlide) to form chlorophyllide a (Chlide). This reaction is light-independent. The L component serves as a unique electron donor to the NB-component of the complex, and binds Mg-ATP. This chain is Light-independent protochlorophyllide reductase iron-sulfur ATP-binding protein, found in Roseiflexus castenholzii (strain DSM 13941 / HLO8).